Consider the following 270-residue polypeptide: 3-phenylpropionate-dihydrodiol/cinnamic acid-dihydrodiol dehydrogenase (270 aa).

10–34 (FITGGGSGLGLALVERFIEEGAQVA) provides a ligand contact to NAD(+). Residue Ser143 coordinates substrate. Catalysis depends on Tyr156, which acts as the Proton acceptor.

It belongs to the short-chain dehydrogenases/reductases (SDR) family.

The catalysed reaction is 3-(cis-5,6-dihydroxycyclohexa-1,3-dien-1-yl)propanoate + NAD(+) = 3-(2,3-dihydroxyphenyl)propanoate + NADH + H(+). The enzyme catalyses (2E)-3-(cis-5,6-dihydroxycyclohexa-1,3-dien-1-yl)prop-2-enoate + NAD(+) = (2E)-3-(2,3-dihydroxyphenyl)prop-2-enoate + NADH + H(+). The protein operates within aromatic compound metabolism; 3-phenylpropanoate degradation. Functionally, converts 3-phenylpropionate-dihydrodiol (PP-dihydrodiol) and cinnamic acid-dihydrodiol (CI-dihydrodiol) into 3-(2,3-dihydroxylphenyl)propanoic acid (DHPP) and 2,3-dihydroxicinnamic acid (DHCI), respectively. The chain is 3-phenylpropionate-dihydrodiol/cinnamic acid-dihydrodiol dehydrogenase from Escherichia coli O8 (strain IAI1).